The sequence spans 346 residues: MNNLKWVAYFLKSRMNWIFWILFLNLLMLGISLIDYDFPIDSLFYIVSLNLSLTMIFLILTYFKEVKLYKHFDKDKEIEEIKHKDLAETPFQRHTVDYLYRQISAHKEKVVEQQLQLNMHEQTITEFVHDIKTPVTAMKLLIDQEKNQERKQALLYEWSRINSMLDTQLYITRLESQRKDMYFDYVSLKRMVIDEIQLTRHISQVKGIGFDVDFKVDDYVYTDTKWCRMIIRQILSNALKYSENFNIEIGTELNDQHVSLYIKDYGRGISKKDMPRIFERGFTSTANRNETTSSGMGLYLVNSVKDQLGIHLQVTSTVGKGTTVRLIFPLQNEIVERMSEVTNLSF.

Transmembrane regions (helical) follow at residues 15 to 35 and 43 to 63; these read MNWIFWILFLNLLMLGISLID and LFYIVSLNLSLTMIFLILTYF. One can recognise a Histidine kinase domain in the interval 126-332; sequence EFVHDIKTPV…TVRLIFPLQN (207 aa).

Interacts with GraX.

Its subcellular location is the cell membrane. The catalysed reaction is ATP + protein L-histidine = ADP + protein N-phospho-L-histidine.. Functionally, member of the two-component regulatory system GraR/GraS involved in resistance against cationic antimicrobial peptides (CAMPs). Functions as a sensor protein kinase which phosphorylates GraR through the auxiliary protein GraX. In turn, GraR up-regulates many genes such as adhesins, exoproteins, transporters, toxins, and proteins involved in cell wall synthesis. Down-regulates the expression of many genes involved in RNA and amino acid synthesis or glycolysis. The protein is Sensor histidine kinase GraS (graS) of Staphylococcus aureus (strain Mu50 / ATCC 700699).